We begin with the raw amino-acid sequence, 493 residues long: Transcript termination protein A18 (493 aa).

One can recognise a Helicase ATP-binding domain in the interval 100 to 256 (MIELKRPLYI…NSIINIAKLS (157 aa)). An ATP-binding site is contributed by 113–120 (LACGFGKT). A DESH box motif is present at residues 206 to 209 (DESH). One can recognise a Helicase C-terminal domain in the interval 309 to 456 (ILDTLVEEFK…IISLSVDKLG (148 aa)).

The protein belongs to the helicase family. Poxviruses subfamily. In terms of assembly, interacts with G2. Might be part of a transcription complex composed at least of G2, A18, and H5.

It localises to the virion. In terms of biological role, DNA helicase which seems to act as a postreplicative transcription termination factor. Involved in ATP-dependent release of nascent RNA. Forms a stable complex with single-stranded DNA, and to a lesser extent RNA. The polypeptide is Transcript termination protein A18 (Mus musculus (Mouse)).